We begin with the raw amino-acid sequence, 256 residues long: Small ribosomal subunit protein eS1 (256 aa).

The segment covering 1–18 (MAVGKNKRLSKGKKGIKK) has biased composition (basic residues). The disordered stretch occupies residues 1–20 (MAVGKNKRLSKGKKGIKKRT). At A2 the chain carries N-acetylalanine; partial.

Belongs to the eukaryotic ribosomal protein eS1 family. In terms of assembly, component of the small ribosomal subunit. Mature ribosomes consist of a small (40S) and a large (60S) subunit. The 40S subunit contains about 33 different proteins and 1 molecule of RNA (18S). The 60S subunit contains about 49 different proteins and 3 molecules of RNA (25S, 5.8S and 5S).

It is found in the cytoplasm. This chain is Small ribosomal subunit protein eS1 (rps1), found in Aspergillus flavus (strain ATCC 200026 / FGSC A1120 / IAM 13836 / NRRL 3357 / JCM 12722 / SRRC 167).